The chain runs to 314 residues: DNA-directed RNA polymerase subunit alpha (314 aa).

The interval 1–229 (MLESKLKAPV…EHLNYFANPE (229 aa)) is alpha N-terminal domain (alpha-NTD). The interval 246-314 (SAEEDLDLPL…LAKKGFTLKE (69 aa)) is alpha C-terminal domain (alpha-CTD).

The protein belongs to the RNA polymerase alpha chain family. Homodimer. The RNAP catalytic core consists of 2 alpha, 1 beta, 1 beta' and 1 omega subunit. When a sigma factor is associated with the core the holoenzyme is formed, which can initiate transcription.

The catalysed reaction is RNA(n) + a ribonucleoside 5'-triphosphate = RNA(n+1) + diphosphate. DNA-dependent RNA polymerase catalyzes the transcription of DNA into RNA using the four ribonucleoside triphosphates as substrates. This Thermus aquaticus protein is DNA-directed RNA polymerase subunit alpha (rpoA).